Here is a 128-residue protein sequence, read N- to C-terminus: uncharacterized protein (128 aa).

Basic and acidic residues predominate over residues 1-11 (MDNKKKEENPS). A disordered region spans residues 1–40 (MDNKKKEENPSKSDTSISLPPSSTGEALQNYTESEWNASD). A compositionally biased stretch (polar residues) spans 12–37 (KSDTSISLPPSSTGEALQNYTESEWN).

This is an uncharacterized protein from Caenorhabditis elegans.